The sequence spans 384 residues: Cobalt-precorrin-5B C(1)-methyltransferase (384 aa).

Belongs to the CbiD family.

It catalyses the reaction Co-precorrin-5B + S-adenosyl-L-methionine = Co-precorrin-6A + S-adenosyl-L-homocysteine. Its pathway is cofactor biosynthesis; adenosylcobalamin biosynthesis; cob(II)yrinate a,c-diamide from sirohydrochlorin (anaerobic route): step 6/10. Catalyzes the methylation of C-1 in cobalt-precorrin-5B to form cobalt-precorrin-6A. The chain is Cobalt-precorrin-5B C(1)-methyltransferase from Marinomonas sp. (strain MWYL1).